A 286-amino-acid polypeptide reads, in one-letter code: ATP synthase gamma chain (286 aa).

It belongs to the ATPase gamma chain family. In terms of assembly, F-type ATPases have 2 components, CF(1) - the catalytic core - and CF(0) - the membrane proton channel. CF(1) has five subunits: alpha(3), beta(3), gamma(1), delta(1), epsilon(1). CF(0) has three main subunits: a, b and c.

The protein localises to the cell inner membrane. Produces ATP from ADP in the presence of a proton gradient across the membrane. The gamma chain is believed to be important in regulating ATPase activity and the flow of protons through the CF(0) complex. The polypeptide is ATP synthase gamma chain (Shewanella oneidensis (strain ATCC 700550 / JCM 31522 / CIP 106686 / LMG 19005 / NCIMB 14063 / MR-1)).